The chain runs to 427 residues: Kallistatin (427 aa).

An N-terminal signal peptide occupies residues 1 to 20 (MHLIDYLLLLLVGLLALSHG). N-linked (GlcNAc...) asparagine glycosylation is found at asparagine 33, asparagine 108, asparagine 157, and asparagine 238.

Belongs to the serpin family. Monomer and some homodimers.

It localises to the secreted. Functionally, inhibits human amidolytic and kininogenase activities of tissue kallikrein. The polypeptide is Kallistatin (SERPINA4) (Pongo abelii (Sumatran orangutan)).